A 449-amino-acid chain; its full sequence is Omega-amino acid--pyruvate aminotransferase (449 aa).

Trp-60 is a substrate binding site. 119–120 (GS) provides a ligand contact to pyridoxal 5'-phosphate. An N6-(pyridoxal phosphate)lysine modification is found at Lys-288. Pyridoxal 5'-phosphate is bound at residue Thr-327. Residues Arg-414 and Gln-421 each coordinate substrate.

This sequence belongs to the class-III pyridoxal-phosphate-dependent aminotransferase family. As to quaternary structure, homotetramer. Pyridoxal 5'-phosphate serves as cofactor.

The catalysed reaction is 3-oxopropanoate + L-alanine = beta-alanine + pyruvate. Functionally, catalyzes transamination between a variety of omega-amino acids, mono and diamines, and pyruvate. Plays a pivotal role in the metabolism of the omega amino acids. The chain is Omega-amino acid--pyruvate aminotransferase from Pseudomonas putida (Arthrobacter siderocapsulatus).